The primary structure comprises 123 residues: Large ribosomal subunit protein bL19 (123 aa).

The protein belongs to the bacterial ribosomal protein bL19 family.

This protein is located at the 30S-50S ribosomal subunit interface and may play a role in the structure and function of the aminoacyl-tRNA binding site. The chain is Large ribosomal subunit protein bL19 from Ureaplasma urealyticum serovar 10 (strain ATCC 33699 / Western).